We begin with the raw amino-acid sequence, 106 residues long: UPF0145 protein Athe_0545 (106 aa).

The protein belongs to the UPF0145 family.

The polypeptide is UPF0145 protein Athe_0545 (Caldicellulosiruptor bescii (strain ATCC BAA-1888 / DSM 6725 / KCTC 15123 / Z-1320) (Anaerocellum thermophilum)).